A 172-amino-acid polypeptide reads, in one-letter code: Adenine phosphoribosyltransferase (172 aa).

The protein belongs to the purine/pyrimidine phosphoribosyltransferase family. In terms of assembly, homodimer.

The protein resides in the cytoplasm. The catalysed reaction is AMP + diphosphate = 5-phospho-alpha-D-ribose 1-diphosphate + adenine. Its pathway is purine metabolism; AMP biosynthesis via salvage pathway; AMP from adenine: step 1/1. In terms of biological role, catalyzes a salvage reaction resulting in the formation of AMP, that is energically less costly than de novo synthesis. The sequence is that of Adenine phosphoribosyltransferase from Clostridium kluyveri (strain NBRC 12016).